The following is a 435-amino-acid chain: Zinc finger CCCH domain-containing protein 67 (435 aa).

Residues 1-91 (MSKPEETSDP…DQKEEEEGSE (91 aa)) form a disordered region. C3H1-type zinc fingers lie at residues 101-129 (RPDS…HPVR), 148-176 (NPKL…HMKE), and 194-222 (RPGE…HPDP). A disordered region spans residues 235-274 (GNNGGSFSPKAPSQASSTSWSSTRHMNGTGTAPFIPSMFP). Low complexity predominate over residues 247-256 (SQASSTSWSS). 2 consecutive C3H1-type zinc fingers follow at residues 334–362 (RPDQ…HPKN) and 380–408 (RPDQ…HSIP). The segment at 412–435 (SPSSSQTVEARQVGANGNEDDSWH) is disordered.

It is found in the nucleus. This chain is Zinc finger CCCH domain-containing protein 67, found in Arabidopsis thaliana (Mouse-ear cress).